Consider the following 477-residue polypeptide: Proton extrusion protein PxcA (477 aa).

The next 3 helical transmembrane spans lie at 239–259 (FILLVILVPLLIHQLSKITFV), 354–374 (GIKNIFCDFISLITFVIIIST), and 437–457 (FNFLFIATFPVILDAVFKYWI).

This sequence belongs to the CemA family.

It is found in the cell inner membrane. Its function is as follows. Required for H(+) efflux immediately after light irradiation to form a rapid H(+) concentration gradient across the thylakoid membranes. Together with PxcL, contributes to transient H(+) uptake following dark to light transition. This is Proton extrusion protein PxcA from Trichodesmium erythraeum (strain IMS101).